The sequence spans 328 residues: Phosphatidylglycerol--prolipoprotein diacylglyceryl transferase (328 aa).

3 consecutive transmembrane segments (helical) span residues 15–35 (VIQG…ILIS), 57–77 (IFMF…STLV), and 106–126 (GMAI…TINT). Residue arginine 156 participates in a 1,2-diacyl-sn-glycero-3-phospho-(1'-sn-glycerol) binding. 2 helical membrane passes run 242–262 (GFIF…IEYL) and 289–309 (ISMG…WIIV).

Belongs to the Lgt family.

The protein resides in the cell inner membrane. The enzyme catalyses L-cysteinyl-[prolipoprotein] + a 1,2-diacyl-sn-glycero-3-phospho-(1'-sn-glycerol) = an S-1,2-diacyl-sn-glyceryl-L-cysteinyl-[prolipoprotein] + sn-glycerol 1-phosphate + H(+). Its pathway is protein modification; lipoprotein biosynthesis (diacylglyceryl transfer). Its function is as follows. Catalyzes the transfer of the diacylglyceryl group from phosphatidylglycerol to the sulfhydryl group of the N-terminal cysteine of a prolipoprotein, the first step in the formation of mature lipoproteins. In Borreliella burgdorferi (strain ZS7) (Borrelia burgdorferi), this protein is Phosphatidylglycerol--prolipoprotein diacylglyceryl transferase.